Consider the following 463-residue polypeptide: UDP-N-acetylmuramoylalanine--D-glutamate ligase (463 aa).

109 to 115 (GTDGKST) is a binding site for ATP.

Belongs to the MurCDEF family.

The protein resides in the cytoplasm. It catalyses the reaction UDP-N-acetyl-alpha-D-muramoyl-L-alanine + D-glutamate + ATP = UDP-N-acetyl-alpha-D-muramoyl-L-alanyl-D-glutamate + ADP + phosphate + H(+). Its pathway is cell wall biogenesis; peptidoglycan biosynthesis. Functionally, cell wall formation. Catalyzes the addition of glutamate to the nucleotide precursor UDP-N-acetylmuramoyl-L-alanine (UMA). In Leptospira interrogans serogroup Icterohaemorrhagiae serovar copenhageni (strain Fiocruz L1-130), this protein is UDP-N-acetylmuramoylalanine--D-glutamate ligase.